Here is a 114-residue protein sequence, read N- to C-terminus: Ribosome-binding factor A (114 aa).

The protein belongs to the RbfA family. Monomer. Binds 30S ribosomal subunits, but not 50S ribosomal subunits or 70S ribosomes.

It is found in the cytoplasm. One of several proteins that assist in the late maturation steps of the functional core of the 30S ribosomal subunit. Associates with free 30S ribosomal subunits (but not with 30S subunits that are part of 70S ribosomes or polysomes). Required for efficient processing of 16S rRNA. May interact with the 5'-terminal helix region of 16S rRNA. This Phytoplasma mali (strain AT) protein is Ribosome-binding factor A.